The following is a 351-amino-acid chain: DNA-directed RNA polymerase subunit alpha (351 aa).

Residues 1–245 (MPRRNLLKGF…EHFTVFVNFD (245 aa)) form an alpha N-terminal domain (alpha-NTD) region. An alpha C-terminal domain (alpha-CTD) region spans residues 261–351 (AVLELLNTKI…MRQKEEIDEA (91 aa)).

The protein belongs to the RNA polymerase alpha chain family. In terms of assembly, homodimer. The RNAP catalytic core consists of 2 alpha, 1 beta, 1 beta' and 1 omega subunit. When a sigma factor is associated with the core the holoenzyme is formed, which can initiate transcription.

The catalysed reaction is RNA(n) + a ribonucleoside 5'-triphosphate = RNA(n+1) + diphosphate. DNA-dependent RNA polymerase catalyzes the transcription of DNA into RNA using the four ribonucleoside triphosphates as substrates. The chain is DNA-directed RNA polymerase subunit alpha from Treponema pallidum (strain Nichols).